We begin with the raw amino-acid sequence, 402 residues long: Dual-specificity RNA methyltransferase RlmN (402 aa).

Catalysis depends on glutamate 124, which acts as the Proton acceptor. Residues 130–370 enclose the Radical SAM core domain; sequence DADRGTLCVS…APVRTPRGRD (241 aa). Cysteine 137 and cysteine 375 form a disulfide bridge. The [4Fe-4S] cluster site is built by cysteine 144, cysteine 148, and cysteine 151. S-adenosyl-L-methionine contacts are provided by residues 199-200, serine 231, 253-255, and asparagine 332; these read GE and SLH. Catalysis depends on cysteine 375, which acts as the S-methylcysteine intermediate.

The protein belongs to the radical SAM superfamily. RlmN family. Requires [4Fe-4S] cluster as cofactor.

Its subcellular location is the cytoplasm. It carries out the reaction adenosine(2503) in 23S rRNA + 2 reduced [2Fe-2S]-[ferredoxin] + 2 S-adenosyl-L-methionine = 2-methyladenosine(2503) in 23S rRNA + 5'-deoxyadenosine + L-methionine + 2 oxidized [2Fe-2S]-[ferredoxin] + S-adenosyl-L-homocysteine. The catalysed reaction is adenosine(37) in tRNA + 2 reduced [2Fe-2S]-[ferredoxin] + 2 S-adenosyl-L-methionine = 2-methyladenosine(37) in tRNA + 5'-deoxyadenosine + L-methionine + 2 oxidized [2Fe-2S]-[ferredoxin] + S-adenosyl-L-homocysteine. Functionally, specifically methylates position 2 of adenine 2503 in 23S rRNA and position 2 of adenine 37 in tRNAs. m2A2503 modification seems to play a crucial role in the proofreading step occurring at the peptidyl transferase center and thus would serve to optimize ribosomal fidelity. This is Dual-specificity RNA methyltransferase RlmN from Rhizorhabdus wittichii (strain DSM 6014 / CCUG 31198 / JCM 15750 / NBRC 105917 / EY 4224 / RW1) (Sphingomonas wittichii).